Here is a 21-residue protein sequence, read N- to C-terminus: VTVYDAEGTKVQVDGSLRLVE.

As to quaternary structure, disulfide bond interactions within and between MOMP molecules and other components form high molecular-weight oligomers.

The protein resides in the cell outer membrane. Its function is as follows. Structural rigidity of the outer membrane of elementary bodies and porin forming, permitting diffusion of solutes through the intracellular reticulate body membrane. The polypeptide is Major outer membrane protein (Actinobacillus suis).